Consider the following 460-residue polypeptide: Bifunctional protein GlmU (460 aa).

The pyrophosphorylase stretch occupies residues 1–229; sequence MTNYAIILAA…FNESLGVNDR (229 aa). UDP-N-acetyl-alpha-D-glucosamine contacts are provided by residues 8 to 11, lysine 22, glutamine 72, and 77 to 78; these read LAAG and GT. Mg(2+) is bound at residue aspartate 102. UDP-N-acetyl-alpha-D-glucosamine is bound by residues glycine 139, glutamate 154, asparagine 169, and asparagine 227. Asparagine 227 lines the Mg(2+) pocket. The segment at 230–250 is linker; that stretch reads VALATAETVMRQRITQKHMVN. The interval 251–460 is N-acetyltransferase; it reads GVTFQNPETV…RLAHHPSRSK (210 aa). UDP-N-acetyl-alpha-D-glucosamine is bound by residues arginine 332 and lysine 350. Histidine 362 serves as the catalytic Proton acceptor. 2 residues coordinate UDP-N-acetyl-alpha-D-glucosamine: tyrosine 365 and asparagine 376. Acetyl-CoA is bound by residues alanine 379, 385 to 386, serine 404, alanine 422, and arginine 439; that span reads NY.

In the N-terminal section; belongs to the N-acetylglucosamine-1-phosphate uridyltransferase family. It in the C-terminal section; belongs to the transferase hexapeptide repeat family. In terms of assembly, homotrimer. Mg(2+) serves as cofactor.

Its subcellular location is the cytoplasm. The catalysed reaction is alpha-D-glucosamine 1-phosphate + acetyl-CoA = N-acetyl-alpha-D-glucosamine 1-phosphate + CoA + H(+). It catalyses the reaction N-acetyl-alpha-D-glucosamine 1-phosphate + UTP + H(+) = UDP-N-acetyl-alpha-D-glucosamine + diphosphate. It participates in nucleotide-sugar biosynthesis; UDP-N-acetyl-alpha-D-glucosamine biosynthesis; N-acetyl-alpha-D-glucosamine 1-phosphate from alpha-D-glucosamine 6-phosphate (route II): step 2/2. The protein operates within nucleotide-sugar biosynthesis; UDP-N-acetyl-alpha-D-glucosamine biosynthesis; UDP-N-acetyl-alpha-D-glucosamine from N-acetyl-alpha-D-glucosamine 1-phosphate: step 1/1. It functions in the pathway bacterial outer membrane biogenesis; LPS lipid A biosynthesis. Functionally, catalyzes the last two sequential reactions in the de novo biosynthetic pathway for UDP-N-acetylglucosamine (UDP-GlcNAc). The C-terminal domain catalyzes the transfer of acetyl group from acetyl coenzyme A to glucosamine-1-phosphate (GlcN-1-P) to produce N-acetylglucosamine-1-phosphate (GlcNAc-1-P), which is converted into UDP-GlcNAc by the transfer of uridine 5-monophosphate (from uridine 5-triphosphate), a reaction catalyzed by the N-terminal domain. In Streptococcus pyogenes serotype M28 (strain MGAS6180), this protein is Bifunctional protein GlmU.